Reading from the N-terminus, the 676-residue chain is Symportin 1 (676 aa).

Basic residues predominate over residues 1–10 (MGKTRRNRVR). Positions 1-28 (MGKTRRNRVRNRTDPIAKPVKPPTDPEL) are disordered. The ARM 1 repeat unit spans residues 183–216 (TILRLLFRLISADIAPQDIYEEAISCLTTLSEDN). Residues 325 to 385 (KGNQGSRESP…EDDEDDDDDS (61 aa)) form a disordered region. Composition is skewed to acidic residues over residues 338–354 (ADEE…DAMD) and 363–385 (EDQE…DDDS). The stretch at 420–453 (TAVPQLIRLSNLPIDSDESLTIQSHALSALNNIS) is one ARM 2 repeat.

This sequence belongs to the nuclear import and ribosome assembly adapter family. As to quaternary structure, component of a hexameric 5S RNP precursor complex, composed of 5S RNA, RRS1, RPF2, RPL5, RPL11 and SYO1; this complex acts as a precursor for ribosome assembly.

In terms of biological role, involved in ribosomal large subunit assembly. The chain is Symportin 1 from Chaetomium thermophilum (strain DSM 1495 / CBS 144.50 / IMI 039719) (Thermochaetoides thermophila).